The following is a 259-amino-acid chain: Acyl-[acyl-carrier-protein]--UDP-N-acetylglucosamine O-acyltransferase (259 aa).

This sequence belongs to the transferase hexapeptide repeat family. LpxA subfamily. In terms of assembly, homotrimer.

The protein resides in the cytoplasm. It carries out the reaction a (3R)-hydroxyacyl-[ACP] + UDP-N-acetyl-alpha-D-glucosamine = a UDP-3-O-[(3R)-3-hydroxyacyl]-N-acetyl-alpha-D-glucosamine + holo-[ACP]. It participates in glycolipid biosynthesis; lipid IV(A) biosynthesis; lipid IV(A) from (3R)-3-hydroxytetradecanoyl-[acyl-carrier-protein] and UDP-N-acetyl-alpha-D-glucosamine: step 1/6. Functionally, involved in the biosynthesis of lipid A, a phosphorylated glycolipid that anchors the lipopolysaccharide to the outer membrane of the cell. In Psychrobacter sp. (strain PRwf-1), this protein is Acyl-[acyl-carrier-protein]--UDP-N-acetylglucosamine O-acyltransferase.